The following is a 182-amino-acid chain: Protein OPG192 (182 aa).

Residues 1–16 form the signal peptide; it reads MYKKLITFLFVIGALA.

Belongs to the orthopoxvirus OPG192 family.

Its subcellular location is the host endoplasmic reticulum. In Vaccinia virus (strain Copenhagen) (VACV), this protein is Protein OPG192 (OPG192).